Reading from the N-terminus, the 329-residue chain is Prostaglandin reductase 1 (329 aa).

Residue T18 is modified to Phosphothreonine. NADP(+) contacts are provided by residues 152–155, K178, Y193, N217, 239–245, 270–272, and N321; these read GAVG, CGAISQY, and FIV. Residue K178 is modified to N6-(2-hydroxyisobutyryl)lysine; alternate. K178 bears the N6-acetyllysine; alternate mark.

It belongs to the NADP-dependent oxidoreductase L4BD family. As to quaternary structure, monomer or homodimer.

The protein resides in the cytoplasm. It catalyses the reaction 13,14-dihydro-15-oxo-prostaglandin E1 + NADP(+) = 15-oxoprostaglandin E1 + NADPH + H(+). The catalysed reaction is 13,14-dihydro-15-oxo-prostaglandin E2 + NADP(+) = 15-oxoprostaglandin E2 + NADPH + H(+). The enzyme catalyses 13,14-dihydro-15-oxo-prostaglandin F1alpha + NADP(+) = 15-oxoprostaglandin F1alpha + NADPH + H(+). It carries out the reaction 13,14-dihydro-15-oxo-PGF2alpha + NADP(+) = 15-oxoprostaglandin F2alpha + NADPH + H(+). It catalyses the reaction leukotriene B4 + NADP(+) = 12-oxo-leukotriene B4 + NADPH + H(+). The catalysed reaction is 20-hydroxy-leukotriene B4 + NADP(+) = 12-oxo-20-hydroxy-leukotriene B4 + NADPH + H(+). The enzyme catalyses 6-trans-leukotriene B4 + NADP(+) = 12-oxo-(5S)-hydroxy-(6E,8E,10E,14Z)-eicosatetraenoate + NADPH + H(+). It carries out the reaction (5S,12S)-dihydroxy-(6E,10E,12E,14Z)-eicosatetraenoate + NADP(+) = 12-oxo-(5S)-hydroxy-(6E,8E,10E,14Z)-eicosatetraenoate + NADPH + H(+). It catalyses the reaction an n-alkanal + NADP(+) = an alk-2-enal + NADPH + H(+). The catalysed reaction is hexanal + NADP(+) = (E)-hex-2-enal + NADPH + H(+). The enzyme catalyses octanal + NADP(+) = (2E)-octenal + NADPH + H(+). It carries out the reaction decanal + NADP(+) = (2E)-decenal + NADPH + H(+). It catalyses the reaction dodecanal + NADP(+) = (2E)-dodecenal + NADPH + H(+). The catalysed reaction is 4-hydroxynonanal + NADP(+) = (E)-4-hydroxynon-2-enal + NADPH + H(+). The enzyme catalyses pentan-2-one + NADP(+) = (E)-pent-3-en-2-one + NADPH + H(+). It carries out the reaction nonan-2-one + NADP(+) = (3E)-nonen-2-one + NADPH + H(+). Functionally, NAD(P)H-dependent oxidoreductase involved in metabolic inactivation of pro- and anti-inflammatory eicosanoids: prostaglandins (PG), leukotrienes (LT) and lipoxins (LX). Catalyzes with high efficiency the reduction of the 13,14 double bond of 15-oxoPGs, including 15-oxo-PGE1, 15-oxo-PGE2, 15-oxo-PGF1-alpha and 15-oxo-PGF2-alpha. Catalyzes with lower efficiency the oxidation of the hydroxyl group at C12 of LTB4 and its derivatives, converting them into biologically less active 12-oxo-LTB4 metabolites. Reduces 15-oxo-LXA4 to 13,14 dihydro-15-oxo-LXA4, enhancing neutrophil recruitment at the inflammatory site. Plays a role in metabolic detoxification of alkenals and ketones. Reduces alpha,beta-unsaturated alkenals and ketones, particularly those with medium-chain length, showing highest affinity toward (2E)-decenal and (3E)-3-nonen-2-one. May inactivate 4-hydroxy-2-nonenal, a cytotoxic lipid constituent of oxidized low-density lipoprotein particles. The sequence is that of Prostaglandin reductase 1 (Ptgr1) from Mus musculus (Mouse).